A 365-amino-acid chain; its full sequence is Peptide chain release factor 2 (365 aa).

At Gln251 the chain carries N5-methylglutamine.

The protein belongs to the prokaryotic/mitochondrial release factor family. In terms of processing, methylated by PrmC. Methylation increases the termination efficiency of RF2.

It is found in the cytoplasm. Functionally, peptide chain release factor 2 directs the termination of translation in response to the peptide chain termination codons UGA and UAA. The sequence is that of Peptide chain release factor 2 from Campylobacter jejuni subsp. jejuni serotype O:2 (strain ATCC 700819 / NCTC 11168).